A 211-amino-acid chain; its full sequence is Protein G12 (211 aa).

A signal peptide spans 1–19 (MKIAAFVVACLVATSAVSC).

The protein is Protein G12 of Anopheles gambiae (African malaria mosquito).